Consider the following 434-residue polypeptide: Alpha-enolase (434 aa).

Mg(2+) is bound at residue Ser40. Substrate contacts are provided by His158 and Glu167. Glu210 serves as the catalytic Proton donor. Residues Asp245, Glu293, and Asp318 each coordinate Mg(2+). Substrate-binding residues include Glu293 and Asp318. Lys343 serves as the catalytic Proton acceptor. Substrate contacts are provided by residues 370 to 373 and Lys394; that span reads SHRS.

It belongs to the enolase family. As to quaternary structure, homodimer. Mg(2+) is required as a cofactor.

The protein resides in the cytoplasm. It carries out the reaction (2R)-2-phosphoglycerate = phosphoenolpyruvate + H2O. The protein operates within carbohydrate degradation; glycolysis; pyruvate from D-glyceraldehyde 3-phosphate: step 4/5. This is Alpha-enolase (eno1) from Xenopus laevis (African clawed frog).